The chain runs to 101 residues: LGKFSQTCYNSAIQGSVLTSTCERTNGGYNTSSIDLNSVIENVDGSLKWQPSNFIETCRNTQLAGSSELAAECKTRAQQFVSTKINLDDHIANIDGTLKYE.

Disulfide bonds link Cys8–Cys22 and Cys58–Cys73.

The protein belongs to the cyanovirin-N family. In solution exists as a metastable domain-swapped homodimer which very slowly converts into a more stable monomeric form at room temperature. Under physiological conditions it is unlikely that the dimeric species exists and indeed the monomer is more active against HIV. Interacts with HIV-1 gp120. In terms of processing, cleavage, or reduction and alkylation of the disulfide bonds results in the loss of anti-HIV activity.

Mannose-binding lectin. This Nostoc ellipsosporum protein is Cyanovirin-N.